Consider the following 435-residue polypeptide: Astacin-like metalloendopeptidase (435 aa).

A signal peptide spans 1-23; sequence MGIMGSLWPWILTMLSLLGLSMG. Residues 85 to 282 form the Peptidase M12A domain; that stretch reads RLLSVTNNKW…TRVCRLYNCS (198 aa). 2 disulfides stabilise this stretch: cysteine 132/cysteine 281 and cysteine 153/cysteine 172. Position 182 (histidine 182) interacts with Zn(2+). Glutamate 183 is an active-site residue. The Zn(2+) site is built by histidine 186 and histidine 192. A compositionally biased stretch (low complexity) spans 318-329; the sequence is SEESGSSAPSGS. Residues 318 to 356 are disordered; sequence SEESGSSAPSGSRTGGQSIAGLGNSQQGWEHPPQSTFSV. The segment covering 340–355 has biased composition (polar residues); it reads GNSQQGWEHPPQSTFS.

In terms of assembly, interacts (via N-terminal domain) with SPACA3; the interaction occurs during fertilization. Requires Zn(2+) as cofactor. Ovary-specific. Expressed in secondary, antral and Graafian follicle oocytes. Expressed in the egg cells. Not detected in two-cell embryos. Not detected in naked oocytes, oocytes in primordial or unilaminar primary follicles, or in any other ovarian cells at pre-pubertal, pubertal or adult stages (at protein level). Ovary-specific.

The protein resides in the cytoplasm. It localises to the cell membrane. Its subcellular location is the cytoplasmic vesicle. The protein localises to the secretory vesicle. It is found in the cortical granule. With respect to regulation, inhibited by wide spectrum metalloproteinase inhibitor batimastat (BB-94). Also inhibited by EDTA. Functionally, oocyte-specific oolemmal receptor involved in sperm and egg adhesion and fertilization. Plays a role in the polyspermy inhibition. Probably acts as a protease for the post-fertilization cleavage of ZP2. Cleaves the sperm-binding ZP2 at the surface of the zona pellucida after fertilization and cortical granule exocytosis, rendering the zona pellucida unable to support further sperm binding. The chain is Astacin-like metalloendopeptidase from Mus musculus (Mouse).